The sequence spans 408 residues: tRNA(Ile)-lysidine synthase (408 aa).

27 to 32 (SGGGDS) lines the ATP pocket.

The protein belongs to the tRNA(Ile)-lysidine synthase family.

Its subcellular location is the cytoplasm. It carries out the reaction cytidine(34) in tRNA(Ile2) + L-lysine + ATP = lysidine(34) in tRNA(Ile2) + AMP + diphosphate + H(+). Functionally, ligates lysine onto the cytidine present at position 34 of the AUA codon-specific tRNA(Ile) that contains the anticodon CAU, in an ATP-dependent manner. Cytidine is converted to lysidine, thus changing the amino acid specificity of the tRNA from methionine to isoleucine. The chain is tRNA(Ile)-lysidine synthase from Caulobacter vibrioides (strain ATCC 19089 / CIP 103742 / CB 15) (Caulobacter crescentus).